A 264-amino-acid polypeptide reads, in one-letter code: 3-methyl-2-oxobutanoate hydroxymethyltransferase (264 aa).

D45 and D84 together coordinate Mg(2+). 3-methyl-2-oxobutanoate-binding positions include D45–S46, D84, and K112. Residue E114 participates in Mg(2+) binding. The Proton acceptor role is filled by E181.

Belongs to the PanB family. In terms of assembly, homodecamer; pentamer of dimers. Mg(2+) serves as cofactor.

Its subcellular location is the cytoplasm. The enzyme catalyses 3-methyl-2-oxobutanoate + (6R)-5,10-methylene-5,6,7,8-tetrahydrofolate + H2O = 2-dehydropantoate + (6S)-5,6,7,8-tetrahydrofolate. The protein operates within cofactor biosynthesis; (R)-pantothenate biosynthesis; (R)-pantoate from 3-methyl-2-oxobutanoate: step 1/2. Catalyzes the reversible reaction in which hydroxymethyl group from 5,10-methylenetetrahydrofolate is transferred onto alpha-ketoisovalerate to form ketopantoate. The chain is 3-methyl-2-oxobutanoate hydroxymethyltransferase from Vibrio cholerae serotype O1 (strain ATCC 39541 / Classical Ogawa 395 / O395).